A 438-amino-acid chain; its full sequence is Putative permease HI_0125 (438 aa).

13 consecutive transmembrane segments (helical) span residues 21 to 41 (IIAGLTTFLAMVYSVIVVPNM), 51 to 71 (SVFIATCLVAGLGSILIGLWA), 73 to 93 (APMAIGCAISLTAFTAFSLVI), 97 to 117 (VAIPVALGAVFLMGVVFTLIS), 137 to 157 (AGIGIGLFLLLIAANGVGLVV), 167 to 187 (LGDFTSFPVMMSLIGLALIIG), 195 to 215 (GGILWVIIAITIVGLIFDPNV), 238 to 258 (FMGALQPAILPVVFALVMTAV), 296 to 316 (LFSGLFGTAPAAVYIESAAGT), 326 to 346 (AIVVGVLFLLMLFFQPLAFLV), 347 to 367 (PGYATAPALMYVGLLMLSNVS), 386 to 406 (FIVLTANIVTGIMLGFAALVI), and 418 to 438 (NVGTVIIAIVLVAFYAGGWAI). ATP is bound at residue 315–322 (GTAAGGKT).

It belongs to the nucleobase:cation symporter-2 (NCS2) (TC 2.A.40) family. Azg-like subfamily.

It localises to the cell membrane. The chain is Putative permease HI_0125 from Haemophilus influenzae (strain ATCC 51907 / DSM 11121 / KW20 / Rd).